The sequence spans 242 residues: 4-hydroxy-tetrahydrodipicolinate reductase (242 aa).

NAD(+) contacts are provided by residues 79–81 (ATT) and 103–106 (SANM). The Proton donor/acceptor role is filled by histidine 135. Residue histidine 136 coordinates (S)-2,3,4,5-tetrahydrodipicolinate. Lysine 139 serves as the catalytic Proton donor. 145 to 146 (GT) contributes to the (S)-2,3,4,5-tetrahydrodipicolinate binding site.

Belongs to the DapB family.

The protein localises to the cytoplasm. It carries out the reaction (S)-2,3,4,5-tetrahydrodipicolinate + NAD(+) + H2O = (2S,4S)-4-hydroxy-2,3,4,5-tetrahydrodipicolinate + NADH + H(+). The enzyme catalyses (S)-2,3,4,5-tetrahydrodipicolinate + NADP(+) + H2O = (2S,4S)-4-hydroxy-2,3,4,5-tetrahydrodipicolinate + NADPH + H(+). It functions in the pathway amino-acid biosynthesis; L-lysine biosynthesis via DAP pathway; (S)-tetrahydrodipicolinate from L-aspartate: step 4/4. In terms of biological role, catalyzes the conversion of 4-hydroxy-tetrahydrodipicolinate (HTPA) to tetrahydrodipicolinate. This Staphylococcus carnosus (strain TM300) protein is 4-hydroxy-tetrahydrodipicolinate reductase.